Here is a 517-residue protein sequence, read N- to C-terminus: Putative transporter C543.05c (517 aa).

11 helical membrane-spanning segments follow: residues 68–88 (SFGV…FALL), 93–113 (LCIV…YDIM), 121–141 (FPFL…IAIA), 155–175 (CEIF…QVLC), 186–206 (FLSI…DTVG), 217–237 (ILLL…FQHI), 269–289 (IPVG…ILFY), 311–331 (GFHW…ILGI), 377–397 (SNFI…LLVL), 403–423 (CVLA…NGIT), and 449–471 (RVVW…ITQV).

It belongs to the anion exchanger (TC 2.A.31) family.

The protein resides in the vacuole membrane. The sequence is that of Putative transporter C543.05c from Schizosaccharomyces pombe (strain 972 / ATCC 24843) (Fission yeast).